Reading from the N-terminus, the 333-residue chain is Protein-methionine-sulfoxide reductase catalytic subunit MsrP (333 aa).

The segment at residues 1-43 (MHKHRKPTEADVTPESLFYQRRRILKALGISAAALSLPFSAQA) is a signal peptide (tat-type signal). Mo-molybdopterin contacts are provided by residues Asn-87, 90–91 (YE), Cys-145, Thr-180, Asn-232, Arg-237, and 248–250 (NIK).

Belongs to the MsrP family. As to quaternary structure, heterodimer of a catalytic subunit (MsrP) and a heme-binding subunit (MsrQ). Mo-molybdopterin serves as cofactor. Post-translationally, predicted to be exported by the Tat system. The position of the signal peptide cleavage has not been experimentally proven.

The protein resides in the periplasm. The catalysed reaction is L-methionyl-[protein] + a quinone + H2O = L-methionyl-(S)-S-oxide-[protein] + a quinol. It carries out the reaction L-methionyl-[protein] + a quinone + H2O = L-methionyl-(R)-S-oxide-[protein] + a quinol. In terms of biological role, part of the MsrPQ system that repairs oxidized periplasmic proteins containing methionine sulfoxide residues (Met-O), using respiratory chain electrons. Thus protects these proteins from oxidative-stress damage caused by reactive species of oxygen and chlorine generated by the host defense mechanisms. MsrPQ is essential for the maintenance of envelope integrity under bleach stress, rescuing a wide series of structurally unrelated periplasmic proteins from methionine oxidation. The catalytic subunit MsrP is non-stereospecific, being able to reduce both (R-) and (S-) diastereoisomers of methionine sulfoxide. This is Protein-methionine-sulfoxide reductase catalytic subunit MsrP from Pectobacterium carotovorum subsp. carotovorum (strain PC1).